We begin with the raw amino-acid sequence, 299 residues long: Ophiobolin family sesterterpenoid biosynthesis cluster acetyltransferase (299 aa).

The N-terminal stretch at 1-20 is a signal peptide; sequence MYFFRALLSPVVLWPALVSG. 7 N-linked (GlcNAc...) asparagine glycosylation sites follow: Asn28, Asn58, Asn77, Asn126, Asn177, Asn212, and Asn282.

It belongs to the bfoA family.

It functions in the pathway secondary metabolite biosynthesis; terpenoid biosynthesis. Acetyltransferase; part of the gene cluster that mediates the biosynthesis of an ophiobolin family sesterterpenoid. Functionally, sesterterpenoid synthase; part of the gene cluster that mediates the biosynthesis of an ophiobolin family sesterterpenoid. This is Ophiobolin family sesterterpenoid biosynthesis cluster acetyltransferase from Aspergillus terreus.